A 449-amino-acid chain; its full sequence is MFPGQGRHTYGGQQQLLQLQQYNYGPPQGPPPNGYGPPPGPPPNGYGPPPGPPPQNSWGYGNPSGTQSSNQQRYQGQQSGQQNYNGGYQRPSQPPPQQSGNQRGQPGQNGEPDYGHQYGSGQYSRPPTNQQSFGVENYNYQYSACNGRKKALLVGINYIGTANELRGPINDVNNVEQFLLTHGFKSDDIVKLTDDQRVQRAIPTRQNILDAIQWLVKDARPNDSLFFHYSGHGGQTEDQPDQYGNYDEDDGYDEVIYPLDFQTNGFIVDDLLHDMMVKTLPPGCRMTALFDSCHSGSVLDLPYMYSTKGVLKEPNVMKEAGQGLLQAAMSYATGNSAGIFKGLSSSVKSFMNQGRSSQANEYSKQTKTAACDAISLSGCKDDQTSADSSIGGQATGAMSYAFLTVMNQNPNQSYLSLLQNMRTILQSKYSQKPQLTASHPIDCNLQFIF.

The disordered stretch occupies residues 1-132 (MFPGQGRHTY…YSRPPTNQQS (132 aa)). A compositionally biased stretch (low complexity) spans 10–26 (YGGQQQLLQLQQYNYGP). Positions 27–55 (PQGPPPNGYGPPPGPPPNGYGPPPGPPPQ) are enriched in pro residues. Residues 56–66 (NSWGYGNPSGT) show a composition bias toward polar residues. Composition is skewed to low complexity over residues 67–91 (QSSN…YQRP) and 98–112 (QSGN…NGEP). Over residues 119-132 (GSGQYSRPPTNQQS) the composition is skewed to polar residues. Residues histidine 232 and cysteine 293 contribute to the active site.

The protein belongs to the peptidase C14B family.

Functionally, involved in cell death (apoptosis). The protein is Metacaspase-1 (MCA1) of Lodderomyces elongisporus (strain ATCC 11503 / CBS 2605 / JCM 1781 / NBRC 1676 / NRRL YB-4239) (Yeast).